The primary structure comprises 336 residues: Glycerol-3-phosphate dehydrogenase [NAD(P)+] (336 aa).

4 residues coordinate NADPH: Ser-11, Trp-12, Arg-32, and Lys-109. Sn-glycerol 3-phosphate contacts are provided by Lys-109, Gly-140, and Ser-142. Ala-144 contributes to the NADPH binding site. Lys-195, Asp-248, Ser-258, Arg-259, and Asn-260 together coordinate sn-glycerol 3-phosphate. Residue Lys-195 is the Proton acceptor of the active site. Arg-259 serves as a coordination point for NADPH. NADPH-binding residues include Val-283 and Glu-285.

The protein belongs to the NAD-dependent glycerol-3-phosphate dehydrogenase family.

The protein resides in the cytoplasm. The catalysed reaction is sn-glycerol 3-phosphate + NAD(+) = dihydroxyacetone phosphate + NADH + H(+). It carries out the reaction sn-glycerol 3-phosphate + NADP(+) = dihydroxyacetone phosphate + NADPH + H(+). It participates in membrane lipid metabolism; glycerophospholipid metabolism. Its function is as follows. Catalyzes the reduction of the glycolytic intermediate dihydroxyacetone phosphate (DHAP) to sn-glycerol 3-phosphate (G3P), the key precursor for phospholipid synthesis. The chain is Glycerol-3-phosphate dehydrogenase [NAD(P)+] from Leuconostoc mesenteroides subsp. mesenteroides (strain ATCC 8293 / DSM 20343 / BCRC 11652 / CCM 1803 / JCM 6124 / NCDO 523 / NBRC 100496 / NCIMB 8023 / NCTC 12954 / NRRL B-1118 / 37Y).